The primary structure comprises 493 residues: DM7 family protein GM11958 (493 aa).

Positions 434–493 (ATKSTDTRDDGMNTADYQSQFPELEQDSEPEPEPEPEPQTEDEGEDEDIEILASLCSGSI) are disordered. Positions 457 to 483 (LEQDSEPEPEPEPEPQTEDEGEDEDIE) are enriched in acidic residues.

It belongs to the DM7 family.

The polypeptide is DM7 family protein GM11958 (Drosophila sechellia (Fruit fly)).